A 284-amino-acid polypeptide reads, in one-letter code: L-ribulose-5-phosphate 3-epimerase UlaE (284 aa).

The protein belongs to the L-ribulose-5-phosphate 3-epimerase family.

The catalysed reaction is L-ribulose 5-phosphate = L-xylulose 5-phosphate. It functions in the pathway cofactor degradation; L-ascorbate degradation; D-xylulose 5-phosphate from L-ascorbate: step 3/4. In terms of biological role, catalyzes the isomerization of L-xylulose-5-phosphate to L-ribulose-5-phosphate. Is involved in the anaerobic L-ascorbate utilization. The protein is L-ribulose-5-phosphate 3-epimerase UlaE of Salmonella heidelberg (strain SL476).